The following is a 281-amino-acid chain: Eukaryotic translation initiation factor 3 subunit G (281 aa).

Residues 1–32 (MSRPAGRTDWAEEDDETELALPSQTVVKNKDG) form a disordered region. An RRM domain is found at 202–280 (ATLRVTNVSE…LILRVEFAKK (79 aa)).

It belongs to the eIF-3 subunit G family. Component of the eukaryotic translation initiation factor 3 (eIF-3) complex.

It is found in the cytoplasm. Functionally, RNA-binding component of the eukaryotic translation initiation factor 3 (eIF-3) complex, which is involved in protein synthesis of a specialized repertoire of mRNAs and, together with other initiation factors, stimulates binding of mRNA and methionyl-tRNAi to the 40S ribosome. The eIF-3 complex specifically targets and initiates translation of a subset of mRNAs involved in cell proliferation. This subunit can bind 18S rRNA. This Phaeosphaeria nodorum (strain SN15 / ATCC MYA-4574 / FGSC 10173) (Glume blotch fungus) protein is Eukaryotic translation initiation factor 3 subunit G.